The chain runs to 515 residues: Cytochrome P450 monooxygenase janP (515 aa).

A helical transmembrane segment spans residues 20 to 36 (GFLWKYAAFMVFIYLLL). A heme-binding site is contributed by Cys-456. An N-linked (GlcNAc...) asparagine glycan is attached at Asn-501.

This sequence belongs to the cytochrome P450 family. Heme is required as a cofactor.

The protein resides in the membrane. It functions in the pathway secondary metabolite biosynthesis. Cytochrome P450 monooxygenase; part of the gene cluster that mediates the biosynthesis of the indole diterpenes janthitremanes such as shearinine K or shearinine A. The geranylgeranyl diphosphate (GGPP) synthase janG catalyzes the first step in janthitremane biosynthesis via conversion of farnesyl pyrophosphate and isopentyl pyrophosphate into geranylgeranyl pyrophosphate (GGPP). Condensation of indole-3-glycerol phosphate with GGPP by the prenyl transferase janC then forms 3-geranylgeranylindole (3-GGI). Epoxidation by the FAD-dependent monooxygenase janM leads to a epoxidized-GGI that is substrate of the terpene cyclase janB for cyclization to yield paspaline. Paspaline is subsequently converted to 13-desoxypaspaline by the cytochrome P450 monooxygenase janP, via beta-PC-M6 in a series of alpha-face oxidations. The cytochrome P450 monooxygenase janQ is proposed to carry out sequential beta-face oxidation steps at C-7 and C-13 of 13-desoxypaspaline to form paspalicine and paspalinine respectively. The indole diterpene prenyltransferase janD may then convert paspalinine into shearinine K which is substrate of janO and/or additional enzymes for oxidation and cyclization to generate shearinine A. This chain is Cytochrome P450 monooxygenase janP, found in Penicillium janthinellum (Penicillium vitale).